The sequence spans 343 residues: MKVSIIGATGYGGLELIRLLHQHASVDIATLHSFSAQSETLATFYPHLKDLEASPLEKINSAEIIEKSDTVFIATPSGIAKDIALPYVDAGLNVIDLSGDFRLKDRQLYEKWYGKSAAPIEYIAKAEYGLAEFRDKKEARFIANPGCYATATLLGIAPLVISQLIDPTSIIVDAKSGISGAGKVPSASTHFTETNENMTLYKMNSHQHIPEIMQQLTKWDETIPAIQFSTSLIPITRGIFTTIYVKPKNPITQKELHTLYKSTYENAPFVRIQPENVYPTVKQVTASNYCDIGLAYNEKTNVITIVSVIDNLVKGAAGQAIQNLNIMANFAESDGLRFIPVYP.

C147 is a catalytic residue.

It belongs to the NAGSA dehydrogenase family. Type 1 subfamily.

The protein localises to the cytoplasm. It catalyses the reaction N-acetyl-L-glutamate 5-semialdehyde + phosphate + NADP(+) = N-acetyl-L-glutamyl 5-phosphate + NADPH + H(+). The protein operates within amino-acid biosynthesis; L-arginine biosynthesis; N(2)-acetyl-L-ornithine from L-glutamate: step 3/4. In terms of biological role, catalyzes the NADPH-dependent reduction of N-acetyl-5-glutamyl phosphate to yield N-acetyl-L-glutamate 5-semialdehyde. This chain is N-acetyl-gamma-glutamyl-phosphate reductase, found in Listeria monocytogenes serotype 4b (strain F2365).